The following is a 197-amino-acid chain: Peptide deformylase (197 aa).

Positions 106 and 148 each coordinate Fe cation. Glutamate 149 is a catalytic residue. A Fe cation-binding site is contributed by histidine 152.

This sequence belongs to the polypeptide deformylase family. Fe(2+) serves as cofactor.

It carries out the reaction N-terminal N-formyl-L-methionyl-[peptide] + H2O = N-terminal L-methionyl-[peptide] + formate. In terms of biological role, removes the formyl group from the N-terminal Met of newly synthesized proteins. Requires at least a dipeptide for an efficient rate of reaction. N-terminal L-methionine is a prerequisite for activity but the enzyme has broad specificity at other positions. This is Peptide deformylase from Mycobacterium ulcerans (strain Agy99).